Here is a 508-residue protein sequence, read N- to C-terminus: Cobyric acid synthase (508 aa).

The GATase cobBQ-type domain maps to 249–451 (EVDVAIINLP…IHGIFENSLF (203 aa)). The active-site Nucleophile is the cysteine 330. Histidine 443 is an active-site residue.

This sequence belongs to the CobB/CobQ family. CobQ subfamily.

The protein operates within cofactor biosynthesis; adenosylcobalamin biosynthesis. In terms of biological role, catalyzes amidations at positions B, D, E, and G on adenosylcobyrinic A,C-diamide. NH(2) groups are provided by glutamine, and one molecule of ATP is hydrogenolyzed for each amidation. The chain is Cobyric acid synthase from Caldanaerobacter subterraneus subsp. tengcongensis (strain DSM 15242 / JCM 11007 / NBRC 100824 / MB4) (Thermoanaerobacter tengcongensis).